Here is a 192-residue protein sequence, read N- to C-terminus: Large ribosomal subunit protein bL9 (192 aa).

Positions 172–192 (DALRPEDFFDPEADGIDEDEA) are disordered. A compositionally biased stretch (acidic residues) spans 179–192 (FFDPEADGIDEDEA).

The protein belongs to the bacterial ribosomal protein bL9 family.

Functionally, binds to the 23S rRNA. This Rhizobium etli (strain CIAT 652) protein is Large ribosomal subunit protein bL9.